Here is a 692-residue protein sequence, read N- to C-terminus: MGLSTNLHSLDLRSTFFTGLRTSPIPSNFIKISSISNPRRDISTIRAQVSTISLETSVKQRQDEIESLFSKQPSQQDSDRKRNGKSSKNGASGISSGVKLENIRKSYKGVTVLKDVTWEVKRGEKVGLVGVNGAGKTTQLRIITGQEEPDSGNVIKAKPNMKVAFLSQEFEVSMSKTVREEFMTAFKEEMEITEKLEKVQKAIEGSVDDLDLMGRLLDEFDLLQRRAQAVNLDSVDAKISKLMPELGFAPEDADRLVASFSGGWQMRMSLGKILLQDPDLLLLDEPTNHLDLDTIEWLEGYLQKQDVPMVIISHDRAFLDQLCTKIVETEMGVSRTFEGNYSQYVISKAEWIETQNAAWEKQQKDIDSTKDLIARLGAGANSGRASTAEKKLEKLQEQELIEKPFQRKQMKIRFPERGTSGRSVVNVKNIDFGFEDKMLFKKANLSIERGEKIAILGPNGCGKSTLLKLIMGLEKPVKGEVILGEHNVLPNYFEQNQAEVLDLDKTVLETVCEAAEDWRSDDIKGLLGRCNFKADMLDRKVSLLSGGEKARLAFCKFMVTPSTLLVLDEPTNHLDIPSKEMLEEAINEYQGTVIAVSHDRYFIKQIVNRVIEVEDGCLEDYAGDYNYYLEKNLDARTKELEREAELEEKAPKVKAKSKMSKAEKEARKKQKMQAFQQAKQKSKASKNSKRWN.

A disordered region spans residues Glu64–Ser95. The segment covering Ser86–Ser95 has biased composition (polar residues). 2 consecutive ABC transporter domains span residues Val98–Asn356 and Val425–Leu640. Residues Gly130–Thr137 and Gly457–Ser464 each bind ATP. The disordered stretch occupies residues Ala644–Asn692. Residues Gln680–Asn692 are compositionally biased toward basic residues.

This sequence belongs to the ABC transporter superfamily. ABCF family. EF3 (TC 3.A.1.121) subfamily.

The polypeptide is ABC transporter F family member 5 (ABCF5) (Arabidopsis thaliana (Mouse-ear cress)).